A 384-amino-acid chain; its full sequence is MPENYTPAAAATGTWTEEEIRHQPRAWIRSLTNIDALHSALNNFLEPLLRKENLRIILTGAGTSAFIGDIIAPWLASHTGKNFSAVPTTDLVTNPMDYLNPAHPLLLISFGRSGNSPESVAAVELANQFVPECYHLPITCNEAGALYQNAINSDNAFAVLMPAETHDRGFAMTSSITTMMASCLAVFAPETINSQTFRDVADRCQAILTSLGDFSEGVFGYAPWKRIVYLGSGGLQGAARESALKVLELTAGKLAAFYDSPTGFRHGPKSLVDNETLVVVFVSSHPYTRQYDLDLLAELHRDNQAMRVIAIAAESSDIVAAGPHIILPPSRHFIDVEQAFCFLMYAQTFALMQSLHMGNTPDTPSASGTVNRVVQGVIIHPWQA.

2 SIS domains span residues 45 to 197 (LEPL…SQTF) and 215 to 364 (SEGV…PDTP).

It belongs to the SIS family. AgaS subfamily.

It carries out the reaction D-galactosamine 6-phosphate + H2O = D-tagatopyranose 1-phosphate + NH4(+). Functionally, catalyzes the isomerization-deamination of galactosamine 6-phosphate to form tagatofuranose 6-phosphate and ammonium ion. This chain is D-galactosamine-6-phosphate deaminase AgaS, found in Escherichia coli O157:H7.